The primary structure comprises 1376 residues: YLP motif-containing protein 1 (1376 aa).

Disordered regions lie at residues Met1 to Asp335 and Ser511 to Arg1058. Residues Tyr14–Ala27 are compositionally biased toward pro residues. Composition is skewed to low complexity over residues Ala31–Gly50 and Leu59–His80. 5 stretches are compositionally biased toward pro residues: residues His81–Met93, Gln102–Pro114, Pro148–Tyr158, Met166–Tyr176, and Tyr184–Ile204. Composition is skewed to polar residues over residues Gly207–Pro216 and Ser238–Arg260. Over residues Thr261 to Gly271 the composition is skewed to basic residues. The segment covering Asp277 to Ala286 has biased composition (basic and acidic residues). Pro residues-rich tracts occupy residues Pro303 to Glu320, Ser511 to Pro537, Leu545 to Met594, and Pro632 to Gln641. Positions Ser642–Val671 are enriched in polar residues. N6-methyllysine is present on Lys675. Residues Arg698–Gly714 show a composition bias toward basic and acidic residues. Pro residues-rich tracts occupy residues Met738–Lys753, Thr773–Ile796, and Pro840–Val870. Residue Lys886 forms a Glycyl lysine isopeptide (Lys-Gly) (interchain with G-Cter in SUMO2) linkage. 4 stretches are compositionally biased toward basic and acidic residues: residues Ile896–Phe930, Thr937–Pro1004, Gly1013–Met1023, and Arg1039–Arg1058. Lys943 is covalently cross-linked (Glycyl lysine isopeptide (Lys-Gly) (interchain with G-Cter in SUMO2)). Positions Lys1326–Asp1333 are involved in interaction with PPP1CA.

Interacts with PPP1CA and NCOA5. Forms a complex with ILF2, ILF3, KHDRBS1, RBMX, NCOA5 and PPP1CA. In terms of tissue distribution, high level expression seen in the brain, adipose tissue, heart and kidney, with a low level expression in muscle, spleen and lung (at protein level).

The protein localises to the nucleus. Its subcellular location is the nucleus speckle. Its function is as follows. Plays a role in the reduction of telomerase activity during differentiation of embryonic stem cells by binding to the core promoter of TERT and controlling its down-regulation. This is YLP motif-containing protein 1 (Ylpm1) from Rattus norvegicus (Rat).